A 143-amino-acid polypeptide reads, in one-letter code: UPF0306 protein plu4501 (143 aa).

Belongs to the UPF0306 family.

The polypeptide is UPF0306 protein plu4501 (Photorhabdus laumondii subsp. laumondii (strain DSM 15139 / CIP 105565 / TT01) (Photorhabdus luminescens subsp. laumondii)).